The primary structure comprises 407 residues: Putative mannan endo-1,4-beta-mannosidase 9 (407 aa).

Positions 1–31 are cleaved as a signal peptide; the sequence is MGSKRRVILLPTLGVVVLAIAAAVLLHAGEA. Residues tryptophan 95 and asparagine 208 each contribute to the substrate site. Glutamate 209 functions as the Proton donor in the catalytic mechanism. Tyrosine 284 serves as a coordination point for substrate. Glutamate 324 (nucleophile) is an active-site residue. A substrate-binding site is contributed by tryptophan 366.

This sequence belongs to the glycosyl hydrolase 5 (cellulase A) family. Expression not detected.

The protein resides in the secreted. It catalyses the reaction Random hydrolysis of (1-&gt;4)-beta-D-mannosidic linkages in mannans, galactomannans and glucomannans.. The sequence is that of Putative mannan endo-1,4-beta-mannosidase 9 (MAN9) from Oryza sativa subsp. japonica (Rice).